The following is a 202-amino-acid chain: ATP-dependent Clp protease proteolytic subunit (202 aa).

Ser-98 functions as the Nucleophile in the catalytic mechanism. Residue His-123 is part of the active site.

Belongs to the peptidase S14 family. Fourteen ClpP subunits assemble into 2 heptameric rings which stack back to back to give a disk-like structure with a central cavity, resembling the structure of eukaryotic proteasomes.

Its subcellular location is the cytoplasm. The enzyme catalyses Hydrolysis of proteins to small peptides in the presence of ATP and magnesium. alpha-casein is the usual test substrate. In the absence of ATP, only oligopeptides shorter than five residues are hydrolyzed (such as succinyl-Leu-Tyr-|-NHMec, and Leu-Tyr-Leu-|-Tyr-Trp, in which cleavage of the -Tyr-|-Leu- and -Tyr-|-Trp bonds also occurs).. Functionally, cleaves peptides in various proteins in a process that requires ATP hydrolysis. Has a chymotrypsin-like activity. Plays a major role in the degradation of misfolded proteins. The polypeptide is ATP-dependent Clp protease proteolytic subunit (Solidesulfovibrio magneticus (strain ATCC 700980 / DSM 13731 / RS-1) (Desulfovibrio magneticus)).